We begin with the raw amino-acid sequence, 382 residues long: Ferredoxin--NADP reductase, root isozyme 2, chloroplastic (382 aa).

A chloroplast-targeting transit peptide spans 1–64 (MSHSAVSQAG…DGKRYPSTTI (64 aa)). In terms of domain architecture, FAD-binding FR-type spans 97-225 (KESYTAKIVS…TGPSGKVMLL (129 aa)). Cysteine 200 and cysteine 205 are disulfide-bonded. At serine 201 the chain carries Phosphoserine. Threonine 233 carries the post-translational modification Phosphothreonine. 235–253 (IMIATGTGVAPYRGYLRRM) contributes to the NADP(+) binding site.

Belongs to the ferredoxin--NADP reductase type 1 family. FAD is required as a cofactor. Expressed in shoots and roots. More abundant in roots than RFNR1.

It is found in the plastid. Its subcellular location is the chloroplast. The catalysed reaction is 2 reduced [2Fe-2S]-[ferredoxin] + NADP(+) + H(+) = 2 oxidized [2Fe-2S]-[ferredoxin] + NADPH. Maintains the supply of reduced ferredoxin under non-photosynthetic conditions. The polypeptide is Ferredoxin--NADP reductase, root isozyme 2, chloroplastic (RFNR2) (Arabidopsis thaliana (Mouse-ear cress)).